The sequence spans 556 residues: 2-succinyl-5-enolpyruvyl-6-hydroxy-3-cyclohexene-1-carboxylate synthase (556 aa).

This sequence belongs to the TPP enzyme family. MenD subfamily. As to quaternary structure, homodimer. Requires Mg(2+) as cofactor. Mn(2+) serves as cofactor. The cofactor is thiamine diphosphate.

It catalyses the reaction isochorismate + 2-oxoglutarate + H(+) = 5-enolpyruvoyl-6-hydroxy-2-succinyl-cyclohex-3-ene-1-carboxylate + CO2. It functions in the pathway quinol/quinone metabolism; 1,4-dihydroxy-2-naphthoate biosynthesis; 1,4-dihydroxy-2-naphthoate from chorismate: step 2/7. Its pathway is quinol/quinone metabolism; menaquinone biosynthesis. Catalyzes the thiamine diphosphate-dependent decarboxylation of 2-oxoglutarate and the subsequent addition of the resulting succinic semialdehyde-thiamine pyrophosphate anion to isochorismate to yield 2-succinyl-5-enolpyruvyl-6-hydroxy-3-cyclohexene-1-carboxylate (SEPHCHC). This Salmonella paratyphi B (strain ATCC BAA-1250 / SPB7) protein is 2-succinyl-5-enolpyruvyl-6-hydroxy-3-cyclohexene-1-carboxylate synthase.